Consider the following 153-residue polypeptide: Transcription antitermination protein NusB (153 aa).

The protein belongs to the NusB family.

Functionally, involved in transcription antitermination. Required for transcription of ribosomal RNA (rRNA) genes. Binds specifically to the boxA antiterminator sequence of the ribosomal RNA (rrn) operons. The sequence is that of Transcription antitermination protein NusB from Fusobacterium nucleatum subsp. nucleatum (strain ATCC 25586 / DSM 15643 / BCRC 10681 / CIP 101130 / JCM 8532 / KCTC 2640 / LMG 13131 / VPI 4355).